Reading from the N-terminus, the 266-residue chain is Undecaprenyl-diphosphatase (266 aa).

The next 8 helical transmembrane spans lie at 1–21 (MDIFQVIVLALIQGLTEFLPI), 39–59 (QGLTFDVAVNTGSLLAVVIYF), 87–107 (WWIILATIPAVIFGFTAKDFI), 114–134 (IEVIATTTIVFGLLLWWADKL), 144–164 (VGWKKALLIGFAQAMALIPGT), 184–204 (AARFSFLMSVPVSLGAAILVV), 218–238 (ALVLGTALSFVAAYLCIHYFL), and 246–266 (MTPFVIYRLALGAILCVVIFA).

It belongs to the UppP family.

The protein resides in the cell inner membrane. The catalysed reaction is di-trans,octa-cis-undecaprenyl diphosphate + H2O = di-trans,octa-cis-undecaprenyl phosphate + phosphate + H(+). Functionally, catalyzes the dephosphorylation of undecaprenyl diphosphate (UPP). Confers resistance to bacitracin. This is Undecaprenyl-diphosphatase from Shewanella loihica (strain ATCC BAA-1088 / PV-4).